The chain runs to 808 residues: Sucrose synthase 4 (808 aa).

The GT-B glycosyltransferase stretch occupies residues M277–T754.

Belongs to the glycosyltransferase 1 family. Plant sucrose synthase subfamily. As to expression, detected in the whole plant with highest expression in young rosette leaves and roots.

It carries out the reaction an NDP-alpha-D-glucose + D-fructose = a ribonucleoside 5'-diphosphate + sucrose + H(+). Functionally, sucrose-cleaving enzyme that provides UDP-glucose and fructose for various metabolic pathways. This Arabidopsis thaliana (Mouse-ear cress) protein is Sucrose synthase 4 (SUS4).